The primary structure comprises 208 residues: Putative archaetidylserine decarboxylase proenzyme (208 aa).

Ser-171 (schiff-base intermediate with substrate; via pyruvic acid) is an active-site residue. A Pyruvic acid (Ser); by autocatalysis modification is found at Ser-171.

Belongs to the phosphatidylserine decarboxylase family. PSD-A subfamily. In terms of assembly, heterodimer of a large membrane-associated beta subunit and a small pyruvoyl-containing alpha subunit. Requires pyruvate as cofactor. Post-translationally, is synthesized initially as an inactive proenzyme. Formation of the active enzyme involves a self-maturation process in which the active site pyruvoyl group is generated from an internal serine residue via an autocatalytic post-translational modification. Two non-identical subunits are generated from the proenzyme in this reaction, and the pyruvate is formed at the N-terminus of the alpha chain, which is derived from the carboxyl end of the proenzyme. The post-translation cleavage follows an unusual pathway, termed non-hydrolytic serinolysis, in which the side chain hydroxyl group of the serine supplies its oxygen atom to form the C-terminus of the beta chain, while the remainder of the serine residue undergoes an oxidative deamination to produce ammonia and the pyruvoyl prosthetic group on the alpha chain.

Its subcellular location is the cell membrane. It catalyses the reaction archaetidylserine + H(+) = archaetidylethanolamine + CO2. In terms of biological role, catalyzes the formation of archaetidylethanolamine (PtdEtn) from archaetidylserine (PtdSer). The chain is Putative archaetidylserine decarboxylase proenzyme from Methanococcoides burtonii (strain DSM 6242 / NBRC 107633 / OCM 468 / ACE-M).